A 444-amino-acid chain; its full sequence is Divalent metal cation transporter MntH (444 aa).

11 helical membrane passes run Gly-31–Gly-51, Phe-68–Gly-88, Leu-115–Gly-135, Ile-146–Met-166, Ala-175–Ala-195, Val-212–Pro-232, Val-267–Phe-287, Ala-303–Leu-323, Leu-356–Ala-376, Leu-381–Val-401, and Leu-413–Leu-433.

It belongs to the NRAMP family.

It localises to the cell inner membrane. H(+)-stimulated, divalent metal cation uptake system. The sequence is that of Divalent metal cation transporter MntH from Xanthomonas campestris pv. campestris (strain ATCC 33913 / DSM 3586 / NCPPB 528 / LMG 568 / P 25).